Consider the following 497-residue polypeptide: 3-octaprenyl-4-hydroxybenzoate carboxy-lyase (497 aa).

Asn175 contributes to the Mn(2+) binding site. Residues 178-180, 192-194, and 197-198 contribute to the prenylated FMN site; these read IYR, RWL, and RG. Residue Glu241 participates in Mn(2+) binding. Asp290 acts as the Proton donor in catalysis.

Belongs to the UbiD family. In terms of assembly, homohexamer. It depends on prenylated FMN as a cofactor. Requires Mn(2+) as cofactor.

The protein localises to the cell membrane. The enzyme catalyses a 4-hydroxy-3-(all-trans-polyprenyl)benzoate + H(+) = a 2-(all-trans-polyprenyl)phenol + CO2. It participates in cofactor biosynthesis; ubiquinone biosynthesis. Its function is as follows. Catalyzes the decarboxylation of 3-octaprenyl-4-hydroxy benzoate to 2-octaprenylphenol, an intermediate step in ubiquinone biosynthesis. This Shigella boydii serotype 4 (strain Sb227) protein is 3-octaprenyl-4-hydroxybenzoate carboxy-lyase.